A 178-amino-acid polypeptide reads, in one-letter code: Ribosome maturation factor RimP (178 aa).

The protein belongs to the RimP family.

The protein localises to the cytoplasm. In terms of biological role, required for maturation of 30S ribosomal subunits. The chain is Ribosome maturation factor RimP from Cutibacterium acnes (strain DSM 16379 / KPA171202) (Propionibacterium acnes).